A 475-amino-acid chain; its full sequence is Gelsolin-like protein 1 (475 aa).

The tract at residues 1-131 (MGGTSLDPAL…GYRHVDDQFK (131 aa)) is actin binding, actin severing, Ca-sensitive. Residues 1-239 (MGGTSLDPAL…VRKVSKGKDD (239 aa)) are necessary for barbed end capping activity. The stretch at 27–105 (FVLEPVPEVD…IQNYESPLFL (79 aa)) is one Gelsolin-like 1 repeat. Residues 70–73 (DEIG) are actin-actin interfilament contact point. A required for synapse elimination during development region spans residues 106–147 (SYFPDGIRYVSGGYESGYRHVDDQFKNWKPHLFHCKGKRNVR). The interval 133–227 (WKPHLFHCKG…STFWSYFGGV (95 aa)) is required for phosphatidylinositol 4,5-bisphosphate binding and regulation. Gelsolin-like repeat units follow at residues 148 to 208 (CTEV…KVHI), 275 to 341 (RKEQ…STQF), and 375 to 447 (EIAN…PPTF). The tract at residues 240 to 475 (DDNYWKRLTE…VQNMRRLLFH (236 aa)) is F- and G-actin binding, Ca-independent. The tract at residues 248–348 (TEQITLWKVS…TQFTQWFRDW (101 aa)) is inhibitory for phosphatidylinositol 4,5-bisphosphate binding activity.

Belongs to the villin/gelsolin family. As to quaternary structure, monomer. Binds to actin monomers and filaments. Cleavage by caspase ced-3 activates its actin-severing function and is required for the elimination of presynaptic components during development.

The protein localises to the cytoplasm. It localises to the cytoskeleton. In terms of biological role, calcium-regulated, actin-modulating protein that binds to the plus (or barbed) ends of actin monomers or filaments, preventing monomer exchange (end-blocking or capping). Binds actin but does not nucleate actin polymerization, albeit slows down elongation by blocking the barbed ends. By promoting actin depolymerization, required for the elimination of presynaptic components downstream of the egl-1, ced-4 and ced-3 apoptotic pathway during larval development. The sequence is that of Gelsolin-like protein 1 from Caenorhabditis elegans.